The chain runs to 199 residues: Chorismate pyruvate-lyase (199 aa).

Belongs to the chorismate pyruvate-lyase type 2 family.

It catalyses the reaction chorismate = 4-hydroxybenzoate + pyruvate. In terms of biological role, removes the pyruvyl group from chorismate to provide 4-hydroxybenzoate (4HB). Involved in the synthesis of glycosylated p-hydroxybenzoic acid methyl esters (p-HBADs) and phenolic glycolipids (PGL) that play important roles in the pathogenesis of mycobacterial infections. In Mycobacterium bovis (strain ATCC BAA-935 / AF2122/97), this protein is Chorismate pyruvate-lyase.